We begin with the raw amino-acid sequence, 191 residues long: Fe/S biogenesis protein NfuA (191 aa).

The [4Fe-4S] cluster site is built by cysteine 149 and cysteine 152.

The protein belongs to the NfuA family. In terms of assembly, homodimer. Requires [4Fe-4S] cluster as cofactor.

Its function is as follows. Involved in iron-sulfur cluster biogenesis. Binds a 4Fe-4S cluster, can transfer this cluster to apoproteins, and thereby intervenes in the maturation of Fe/S proteins. Could also act as a scaffold/chaperone for damaged Fe/S proteins. The sequence is that of Fe/S biogenesis protein NfuA from Buchnera aphidicola subsp. Baizongia pistaciae (strain Bp).